We begin with the raw amino-acid sequence, 289 residues long: Probable prolyl 4-hydroxylase 10 (289 aa).

A helical; Signal-anchor for type II membrane protein transmembrane segment spans residues 20–40; the sequence is LVFAVLIMSTFVILILLAFGI. At 41–289 the chain is on the lumenal side; the sequence is LSVPSNNAGS…KWLRVHEYKV (249 aa). The region spanning 161 to 284 is the Fe2OG dioxygenase domain; it reads HGEGLQVLHY…KWSSTKWLRV (124 aa). 2 residues coordinate Fe cation: His179 and Asp181. Asn220 is a glycosylation site (N-linked (GlcNAc...) asparagine). Residue His265 coordinates Fe cation. Lys275 is a binding site for 2-oxoglutarate.

The protein belongs to the P4HA family. Fe(2+) serves as cofactor. It depends on L-ascorbate as a cofactor.

It localises to the endoplasmic reticulum membrane. The catalysed reaction is L-prolyl-[collagen] + 2-oxoglutarate + O2 = trans-4-hydroxy-L-prolyl-[collagen] + succinate + CO2. Catalyzes the post-translational formation of 4-hydroxyproline in -Xaa-Pro-Gly- sequences in proline-rich peptide sequences of plant glycoproteins and other proteins. Hydroxyprolines are important constituent of many plant cell wall glycoproteins such as extensins, hydroxyproline-rich glycoproteins, lectins and arabinogalactan proteins. This is Probable prolyl 4-hydroxylase 10 from Arabidopsis thaliana (Mouse-ear cress).